We begin with the raw amino-acid sequence, 481 residues long: ATP synthase subunit beta (481 aa).

167–174 contacts ATP; sequence GGAGVGKT.

It belongs to the ATPase alpha/beta chains family. In terms of assembly, F-type ATPases have 2 components, CF(1) - the catalytic core - and CF(0) - the membrane proton channel. CF(1) has five subunits: alpha(3), beta(3), gamma(1), delta(1), epsilon(1). CF(0) has three main subunits: a(1), b(2) and c(9-12). The alpha and beta chains form an alternating ring which encloses part of the gamma chain. CF(1) is attached to CF(0) by a central stalk formed by the gamma and epsilon chains, while a peripheral stalk is formed by the delta and b chains.

It localises to the cell membrane. It carries out the reaction ATP + H2O + 4 H(+)(in) = ADP + phosphate + 5 H(+)(out). Its function is as follows. Produces ATP from ADP in the presence of a proton gradient across the membrane. The catalytic sites are hosted primarily by the beta subunits. The chain is ATP synthase subunit beta from Corynebacterium diphtheriae (strain ATCC 700971 / NCTC 13129 / Biotype gravis).